The sequence spans 206 residues: Potassium channel B446_29190 (206 aa).

A topological domain (cytoplasmic) is located at residue methionine 1. Residues 2-25 (NESGRVEAFSDGVFAIAITLLILD) traverse the membrane as a helical segment. The RxxxFSD motif signature appears at 6 to 12 (RVEAFSD). The Extracellular segment spans residues 26–44 (IKVPKADGPGGLWHALGAQ). Residues 31–34 (ADGP) are short helix H1. The segment at 36–42 (GLWHALG) is short helix H2. A helical transmembrane segment spans residues 45–70 (WPSYAAYVVSFLVIGIMWVNHHQVFS). Over 71–76 (YVARVD) the chain is Cytoplasmic. A helical transmembrane segment spans residues 77 to 102 (RALMFLNLLVLMVVAAVPWPTAMLAE). Over 103–110 (YLREDRAS) the chain is Extracellular. The helical transmembrane segment at 111–135 (HVAAAVYSLVMVAMALAFQALWWHL) threads the bilayer. Topologically, residues 136–147 (TRTGHLFDPRVD) are cytoplasmic. A helical transmembrane segment spans residues 148-174 (APAARATRIRFALGSLGYPLTVGLAFV). Topologically, residues 175–176 (SA) are extracellular. Residues 177–192 (PLTLAAHGLLALYYGF) form a helical membrane-spanning segment. The Cytoplasmic portion of the chain corresponds to 193–206 (NQVPVPTREAAAPS).

Belongs to the TMEM175 family. Homotetramer.

It is found in the membrane. The catalysed reaction is K(+)(in) = K(+)(out). Functionally, potassium channel. This chain is Potassium channel B446_29190, found in Streptomyces collinus (strain DSM 40733 / Tue 365).